The primary structure comprises 268 residues: Tryptophan synthase alpha chain (268 aa).

Active-site proton acceptor residues include E49 and D60.

Belongs to the TrpA family. In terms of assembly, tetramer of two alpha and two beta chains.

The catalysed reaction is (1S,2R)-1-C-(indol-3-yl)glycerol 3-phosphate + L-serine = D-glyceraldehyde 3-phosphate + L-tryptophan + H2O. It participates in amino-acid biosynthesis; L-tryptophan biosynthesis; L-tryptophan from chorismate: step 5/5. Its function is as follows. The alpha subunit is responsible for the aldol cleavage of indoleglycerol phosphate to indole and glyceraldehyde 3-phosphate. The sequence is that of Tryptophan synthase alpha chain from Photorhabdus laumondii subsp. laumondii (strain DSM 15139 / CIP 105565 / TT01) (Photorhabdus luminescens subsp. laumondii).